The chain runs to 372 residues: High-affinity lysophosphatidic acid receptor (372 aa).

Residues 1–38 (MGCNNTALDNCMLPNLSIATAPLDLRFAFSTPLRMLLA) lie on the Extracellular side of the membrane. 2 N-linked (GlcNAc...) asparagine glycosylation sites follow: Asn4 and Asn15. The chain crosses the membrane as a helical span at residues 39–59 (IIMILMIAIAFLGNAIVCLIV). The Cytoplasmic segment spans residues 60 to 80 (YQKPAMRSAINLLLATLAFSD). Residues 81-101 (IMLSLFCMPFTAVTIITGSWL) traverse the membrane as a helical segment. Topologically, residues 102–108 (FGTQFCQ) are extracellular. The chain crosses the membrane as a helical span at residues 109–129 (ISAMLYWFFVLEGVAILLIIS). Residues 130–149 (VDRFLIIVQRQDKLNPHRAK) lie on the Cytoplasmic side of the membrane. A helical membrane pass occupies residues 150-170 (IMIAASWVLSFCISLPSVVGW). Over 171 to 198 (TLVEVPTRAPQCVLGYTEFSADRVYAVM) the chain is Extracellular. A helical transmembrane segment spans residues 199–219 (LIVAVFFIPFSVMLYSYLCIL). Over 220–268 (NTVRRNAVRIHTHADSLCLSQVSKLGLMGLQRPHQMNVDMSFKTRAFTT) the chain is Cytoplasmic. The helical transmembrane segment at 269–289 (ILILFIGFSLCWLPHSVFSLL) threads the bilayer. The Extracellular portion of the chain corresponds to 290–301 (SVFSRTFYYSSS). Residues 302 to 324 (FYSISTCTLWLTYLKSVFNPVIY) form a helical membrane-spanning segment. Residues 325–372 (CWRIKKFREACLEFMPKTFKILPNVRGRTRRRIRPSTIYVCGEHQSAV) are Cytoplasmic-facing.

This sequence belongs to the G-protein coupled receptor 1 family. As to expression, ubiquitously expressed.

It is found in the cell membrane. Highly selective receptor for lysophosphatidic acid (LPA), a mediator of diverse cellular activities. This is High-affinity lysophosphatidic acid receptor from Xenopus laevis (African clawed frog).